The primary structure comprises 329 residues: Bile salt hydrolase/transferase (329 aa).

C2 serves as the catalytic Nucleophile; acyl-thioester intermediate. Deoxycholate is bound by residues C2 and R18. Residue N82 coordinates taurine.

It belongs to the peptidase C59 family. Homotetramer. The tetramer consists of a dimer of dimers.

The catalysed reaction is glycocholate + H2O = cholate + glycine. It catalyses the reaction cholate + taurine = taurocholate + H2O. The enzyme catalyses taurodeoxycholate + H2O = deoxycholate + taurine. It carries out the reaction glycodeoxycholate + H2O = deoxycholate + glycine. The catalysed reaction is chenodeoxycholate + glycine = glycochenodeoxycholate + H2O. It catalyses the reaction taurochenodeoxycholate + H2O = chenodeoxycholate + taurine. The enzyme catalyses an L-alpha-amino acid + cholate = an N-choloyl-L-alpha-amino acid + H2O. It carries out the reaction an L-alpha-amino acid + taurocholate = an N-choloyl-L-alpha-amino acid + taurine. The catalysed reaction is glycocholate + an L-alpha-amino acid = an N-choloyl-L-alpha-amino acid + glycine. It catalyses the reaction cholate + L-histidine = L-histidocholate + H2O. The enzyme catalyses taurocholate + L-histidine = L-histidocholate + taurine. It carries out the reaction glycocholate + L-histidine = L-histidocholate + glycine. The catalysed reaction is cholate + L-arginine = L-arginocholate + H2O. It catalyses the reaction taurocholate + L-arginine = L-arginocholate + taurine. The enzyme catalyses glycocholate + L-arginine = L-arginocholate + glycine. It carries out the reaction cholate + L-phenylalanine = L-phenylalanocholate + H2O. The catalysed reaction is taurocholate + L-phenylalanine = L-phenylalanocholate + taurine. Its pathway is lipid metabolism; bile acid biosynthesis. Possesses dual functions in bile acid metabolism. Acts as a bile salt hydrolase that catalyzes the deconjugation of glycine- and taurine-linked bile salts, which occurs naturally in the intestines of humans, releasing amino acid residues and deconjugated bile salts (bile acids). Can hydrolyze the amide bond in major human conjugated bile salts, such as glycocholate (GCA), taurocholate (TCA) and taurodeoxycholate (TDCA). Shows a slight preference for taurine-conjugated bile acids as substrates. Also acts as an amine N-acyltransferase that conjugates a wide variety of amino acids to conjugated and non-conjugated bile acids, thus producing bacterial bile acid amidates (BBAAs) - also named microbially conjugated bile acids (MCBAs) - in the gastrointestinal tract. These BBAAs may facilitate communication between the microbiota and host through the activation of human ligand-activated transcription factors. This is Bile salt hydrolase/transferase (cbh) from Clostridium perfringens (strain 13 / Type A).